We begin with the raw amino-acid sequence, 591 residues long: Probable translation initiation factor IF-2 (591 aa).

The tr-type G domain maps to 7 to 223 (LRTPIVCVMG…LLGLAQRFLE (217 aa)). A G1 region spans residues 16 to 23 (GHVDHGKT). A GTP-binding site is contributed by 16–23 (GHVDHGKT). Positions 41 to 45 (AITQH) are G2. The interval 78–81 (DTPG) is G3. GTP is bound by residues 78-82 (DTPGH) and 132-135 (NKID). Positions 132–135 (NKID) are G4. Positions 200 to 202 (SAI) are G5.

The protein belongs to the TRAFAC class translation factor GTPase superfamily. Classic translation factor GTPase family. IF-2 subfamily.

In terms of biological role, function in general translation initiation by promoting the binding of the formylmethionine-tRNA to ribosomes. Seems to function along with eIF-2. The sequence is that of Probable translation initiation factor IF-2 from Methanococcoides burtonii (strain DSM 6242 / NBRC 107633 / OCM 468 / ACE-M).